The chain runs to 266 residues: Undecaprenyl-diphosphatase 1 (266 aa).

The next 8 membrane-spanning stretches (helical) occupy residues 1 to 21 (MDTF…FLPI), 39 to 59 (QGLS…VIYF), 87 to 107 (WWII…KDFI), 114 to 134 (TGVI…ADKM), 149 to 169 (ALLI…RSGA), 183 to 203 (AAAR…AILV), 218 to 238 (ALTL…HYFL), and 246 to 266 (MTPF…FIFL).

The protein belongs to the UppP family.

It is found in the cell inner membrane. The enzyme catalyses di-trans,octa-cis-undecaprenyl diphosphate + H2O = di-trans,octa-cis-undecaprenyl phosphate + phosphate + H(+). In terms of biological role, catalyzes the dephosphorylation of undecaprenyl diphosphate (UPP). Confers resistance to bacitracin. The protein is Undecaprenyl-diphosphatase 1 of Shewanella oneidensis (strain ATCC 700550 / JCM 31522 / CIP 106686 / LMG 19005 / NCIMB 14063 / MR-1).